Reading from the N-terminus, the 1333-residue chain is snRNA-activating protein complex subunit 4 (1333 aa).

The interval 29–84 (HFEVSESSLSSDSEADSLPDEDLETAGAPILEEEGSSESSNDEEDPKDKALPEDPE) is disordered. Composition is skewed to acidic residues over residues 41-52 (SEADSLPDEDLE) and 59-73 (LEEE…DEED). Ser68 carries the phosphoserine modification. An SNAPC5-binding region spans residues 84–133 (ETCLQLNMVYQEVIREKLAEVSQLLAQNQEQQEEILFDLSGTKCPKVKDG). Residues 250 to 288 (EEALLGNRLDSHDWEKISNINFEGARSAEEIRKFWQSSE) enclose the Myb-like 1 domain. Positions 289–343 (HPSISKQEWSTEEVERLKAIAATHGHLEWHLVAEELGTSRSAFQCLQKFQQYNKT) constitute an HTH myb-type 1 domain. The segment at residues 317-341 (WHLVAEELGTSRSAFQCLQKFQQYN) is a DNA-binding region (H-T-H motif). The region spanning 344-395 (LKRKEWTEEEDHMLTQLVQEMRVGNHIPYRKIVYFMEGRDSMQLIYRWTKSL) is the Myb-like 2 domain. HTH myb-type domains follow at residues 396 to 451 (DPSL…HFSL) and 452 to 503 (KKGR…RKKQ). 2 DNA-binding regions (H-T-H motif) span residues 424–447 (WFKI…IRRL) and 476–499 (WARI…KILA). A compositionally biased stretch (basic residues) spans 503–515 (QHLQRKRGQRPRH). Disordered stretches follow at residues 503–558 (QHLQ…LEKS), 662–702 (LMKE…QNKQ), 811–842 (NAKN…LGSC), and 1079–1117 (LPSP…PEKA). Residues 516–546 (SSQWSSSGSSSSSSEDYGSSSGSDGSSGSEN) show a composition bias toward low complexity. 2 stretches are compositionally biased toward polar residues: residues 672–686 (LPSS…NNTA) and 811–826 (NAKN…TGEQ). The SNAPC2-binding stretch occupies residues 1131 to 1247 (AIVTWLKGCQ…NSIPTTLSPD (117 aa)). Ser1252, Ser1254, Ser1301, and Ser1309 each carry phosphoserine. The tract at residues 1282–1333 (PAAPDPVQSHLVSPGQRAPSPGEVSAPSPLDASDGLDDLNVLRTRRARHSRR) is disordered. Basic residues predominate over residues 1324 to 1333 (RTRRARHSRR).

In terms of assembly, part of the SNAPc composed of 5 subunits: SNAPC1, SNAPC2, SNAPC3, SNAPC4 and SNAPC5. SNAPC4 interacts with SNAPC1, SNAPC2, SNAPC5, BRF2 and TBP.

It localises to the nucleus. Part of the SNAPc complex required for the transcription of both RNA polymerase II and III small-nuclear RNA genes. Binds to the proximal sequence element (PSE), a non-TATA-box basal promoter element common to these 2 types of genes. Recruits TBP and BRF2 to the U6 snRNA TATA box. This chain is snRNA-activating protein complex subunit 4, found in Mus musculus (Mouse).